A 213-amino-acid polypeptide reads, in one-letter code: High frequency lysogenization protein HflD homolog (213 aa).

Positions Gln-79–Gln-126 form a coiled coil.

Belongs to the HflD family.

Its subcellular location is the cytoplasm. It localises to the cell inner membrane. This Shigella flexneri serotype 5b (strain 8401) protein is High frequency lysogenization protein HflD homolog.